We begin with the raw amino-acid sequence, 387 residues long: Synaptotagmin-8 (387 aa).

The Extracellular segment spans residues 1-34 (MGHPPVSPSAPAPAGTTAIPGLIPDLVAGTPWPR). The helical; Signal-anchor for type III membrane protein transmembrane segment at 35–55 (WALIAGALAAGVLLVSCLLCA) threads the bilayer. The Cytoplasmic segment spans residues 56–387 (ACCCCRRHRK…LRLRLPLPHS (332 aa)). Residues 70-99 (KESVGLGSARGTTTTHLVQPDVDGLESSPG) are disordered. 2 C2 domains span residues 103 to 219 (QWGC…EHWY) and 231 to 346 (QVGE…QHWA).

The protein belongs to the synaptotagmin family. In terms of assembly, homodimer or homooligomer. Homodimerization and homooligomerization do not depend on Ca(2+). Interacts with SYNCRIP isoform 2 C-terminus. Binds inositol 1,3,4,5-tetrakisphosphate (IP4). Binds to AP2 in a Ca(2+)-independent manner. Interacts with STX1A, STX1B and STX2; the interaction is Ca(2+)-dependent.

Its subcellular location is the cell membrane. The protein localises to the cytoplasmic vesicle. It is found in the secretory vesicle. It localises to the acrosome. In terms of biological role, involved in the trafficking and exocytosis of secretory vesicles in non-neuronal tissues. Mediates Ca(2+)-regulation of exocytosis acrosomal reaction in sperm. May mediate Ca(2+)-regulation of exocytosis in insulin secreted cells. The sequence is that of Synaptotagmin-8 (SYT8) from Homo sapiens (Human).